The following is an 83-amino-acid chain: Beta/kappa-theraphotoxin-Cg2a (83 aa).

Positions methionine 1–alanine 21 are cleaved as a signal peptide. Positions glutamate 22–arginine 53 are excised as a propeptide. 3 disulfide bridges follow: cysteine 55–cysteine 69, cysteine 62–cysteine 74, and cysteine 68–cysteine 78. An Isoleucine amide modification is found at isoleucine 82.

The protein belongs to the neurotoxin 30 (phrixotoxin) family. In terms of tissue distribution, expressed by the venom gland.

It is found in the secreted. Its function is as follows. This gating-modifier toxin shows an important inhibitory activity on sodium channels. It is very active on Nav1.7/SCN9A (IC(50)~0.6 nM), and also shows activity on Nav1.3/SCN3A (IC(50)=292 nM), Nav1.4/SCN4A (IC(50)=2.2-159 nM), and Nav1.5/SCN5A (IC(50)=2.3-2.9 uM). It has also been shown to inhibit tetrodotoxin (TTX)-resistant (IC(50)=27.6 nM) and TTX-sensitive (IC(50)=30.2 nM) sodium channels in rat dorsal root ganglion neurons. Lower inhibitory activity has also been shown on potassium channels: Kv4.2/KCND2 (IC(50)=604.2 nM), Kv4.3/KCND3 (IC(50)=425.1 nM), and Kv2.1/KCNB1 (IC(50)=14.3 uM). It binds to phospholipid membranes. Like its analog AM-8145, it may act by interacting only with the second voltage-sensor domain of Nav1.7/SCN9A. The chain is Beta/kappa-theraphotoxin-Cg2a from Chilobrachys guangxiensis (Chinese earth tiger tarantula).